Consider the following 708-residue polypeptide: Vertnin (708 aa).

2 disordered regions span residues 473 to 499 and 561 to 636; these read PWKGEGGEGAGKATAGGPPAPHEFLPP and APAL…PVAE. Positions 568-582 are enriched in basic and acidic residues; that stretch reads GLREAKEKQEKEAGR.

This sequence belongs to the vertnin family.

This chain is Vertnin (VRTN), found in Ailuropoda melanoleuca (Giant panda).